We begin with the raw amino-acid sequence, 148 residues long: Aspartate 1-decarboxylase (148 aa).

Serine 25 functions as the Schiff-base intermediate with substrate; via pyruvic acid in the catalytic mechanism. Pyruvic acid (Ser) is present on serine 25. Residue threonine 57 coordinates substrate. Tyrosine 58 acts as the Proton donor in catalysis. Residue 73–75 (GAA) participates in substrate binding.

This sequence belongs to the PanD family. In terms of assembly, heterooctamer of four alpha and four beta subunits. Requires pyruvate as cofactor. Post-translationally, is synthesized initially as an inactive proenzyme, which is activated by self-cleavage at a specific serine bond to produce a beta-subunit with a hydroxyl group at its C-terminus and an alpha-subunit with a pyruvoyl group at its N-terminus.

The protein localises to the cytoplasm. It carries out the reaction L-aspartate + H(+) = beta-alanine + CO2. It participates in cofactor biosynthesis; (R)-pantothenate biosynthesis; beta-alanine from L-aspartate: step 1/1. Functionally, catalyzes the pyruvoyl-dependent decarboxylation of aspartate to produce beta-alanine. In Rhodococcus opacus (strain B4), this protein is Aspartate 1-decarboxylase.